The chain runs to 513 residues: uncharacterized protein (513 aa).

Positions 1–48 are disordered; sequence MGSSEEQSVPGDDFYEESGDLNTGLSLVLRPAKSNEGESSLSSPKGSK. The span at 37–48 shows a compositional bias: polar residues; it reads GESSLSSPKGSK. Residues S43, S84, and S123 each carry the phosphoserine modification. Disordered regions lie at residues 210–229, 236–287, 390–414, and 453–481; these read DGNH…GDLA, TRDS…GSKS, AKED…AEPP, and SVLS…TQGC.

This is an uncharacterized protein from Mus musculus (Mouse).